Consider the following 116-residue polypeptide: Methionine-R-sulfoxide reductase B1 (116 aa).

Residues Met1–Lys106 enclose the MsrB domain. 4 residues coordinate Zn(2+): Cys23, Cys26, Cys71, and Cys74. The active-site Nucleophile is the Sec95. Sec95 is a non-standard amino acid (selenocysteine).

The protein belongs to the MsrB Met sulfoxide reductase family. Zn(2+) is required as a cofactor. In terms of processing, truncated MSRB1/SEPX1 proteins produced by failed UGA/Sec decoding are ubiquitinated by some Cul2-RING E3 ubiquitin-protein ligase complexes (containing either PRAME, PRAMF6, PRAMF9 or FEM1C as substrate-recognition component).

The protein resides in the cytoplasm. Its subcellular location is the nucleus. The protein localises to the cytoskeleton. The enzyme catalyses L-methionyl-[protein] + [thioredoxin]-disulfide + H2O = L-methionyl-(R)-S-oxide-[protein] + [thioredoxin]-dithiol. The catalysed reaction is [thioredoxin]-disulfide + L-methionine + H2O = L-methionine (R)-S-oxide + [thioredoxin]-dithiol. Methionine-sulfoxide reductase that specifically reduces methionine (R)-sulfoxide back to methionine. While in many cases, methionine oxidation is the result of random oxidation following oxidative stress, methionine oxidation is also a post-translational modification that takes place on specific residue. Acts as a regulator of actin assembly by reducing methionine (R)-sulfoxide mediated by MICALs (MICAL1, MICAL2 or MICAL3) on actin, thereby promoting filament repolymerization. Plays a role in innate immunity by reducing oxidized actin, leading to actin repolymerization in macrophages. The protein is Methionine-R-sulfoxide reductase B1 (MSRB1) of Homo sapiens (Human).